The following is a 1358-amino-acid chain: DNA-directed RNA polymerase subunit beta (1358 aa).

It belongs to the RNA polymerase beta chain family. In terms of assembly, the RNAP catalytic core consists of 2 alpha, 1 beta, 1 beta' and 1 omega subunit. When a sigma factor is associated with the core the holoenzyme is formed, which can initiate transcription.

It carries out the reaction RNA(n) + a ribonucleoside 5'-triphosphate = RNA(n+1) + diphosphate. Its function is as follows. DNA-dependent RNA polymerase catalyzes the transcription of DNA into RNA using the four ribonucleoside triphosphates as substrates. This is DNA-directed RNA polymerase subunit beta from Francisella tularensis subsp. mediasiatica (strain FSC147).